Here is an 894-residue protein sequence, read N- to C-terminus: Leucine--tRNA ligase, mitochondrial (894 aa).

The N-terminal 9 residues, 1–9 (MLPRPSSRF), are a transit peptide targeting the mitochondrion. The short motif at 56–66 (PYPSGVLHIGH) is the 'HIGH' region element. Positions 646–650 (KMSKS) match the 'KMSKS' region motif. Position 649 (K649) interacts with ATP.

It belongs to the class-I aminoacyl-tRNA synthetase family.

It localises to the mitochondrion matrix. It carries out the reaction tRNA(Leu) + L-leucine + ATP = L-leucyl-tRNA(Leu) + AMP + diphosphate. This is Leucine--tRNA ligase, mitochondrial (NAM2) from Saccharomyces paradoxus (Yeast).